Reading from the N-terminus, the 156-residue chain is ATP synthase subunit b (156 aa).

Residues 7 to 29 (LFAQMVVFLVLAWFTMKFVWPPL) form a helical membrane-spanning segment.

This sequence belongs to the ATPase B chain family. As to quaternary structure, F-type ATPases have 2 components, F(1) - the catalytic core - and F(0) - the membrane proton channel. F(1) has five subunits: alpha(3), beta(3), gamma(1), delta(1), epsilon(1). F(0) has three main subunits: a(1), b(2) and c(10-14). The alpha and beta chains form an alternating ring which encloses part of the gamma chain. F(1) is attached to F(0) by a central stalk formed by the gamma and epsilon chains, while a peripheral stalk is formed by the delta and b chains.

The protein localises to the cell inner membrane. F(1)F(0) ATP synthase produces ATP from ADP in the presence of a proton or sodium gradient. F-type ATPases consist of two structural domains, F(1) containing the extramembraneous catalytic core and F(0) containing the membrane proton channel, linked together by a central stalk and a peripheral stalk. During catalysis, ATP synthesis in the catalytic domain of F(1) is coupled via a rotary mechanism of the central stalk subunits to proton translocation. In terms of biological role, component of the F(0) channel, it forms part of the peripheral stalk, linking F(1) to F(0). This is ATP synthase subunit b from Burkholderia vietnamiensis (strain G4 / LMG 22486) (Burkholderia cepacia (strain R1808)).